The sequence spans 444 residues: Chitinase-like protein Idgf1 (444 aa).

Residues 1 to 20 (MTSLLFVILNIILTLHLCAG) form the signal peptide. The region spanning 29 to 444 (KRLICYYDAQ…PILRSVRGHL (416 aa)) is the GH18 domain. Cysteine 33 and cysteine 60 are disulfide-bonded. Asparagine 213, asparagine 225, and asparagine 335 each carry an N-linked (GlcNAc...) asparagine glycan. Cysteine 346 and cysteine 429 are disulfide-bonded.

The protein belongs to the glycosyl hydrolase 18 family. IDGF subfamily. Post-translationally, glycosylated.

It is found in the secreted. Functionally, cooperates with insulin-like peptides to stimulate the proliferation, polarization and motility of imaginal disk cells. May act by stabilizing the binding of insulin-like peptides to its receptor through a simultaneous interaction with both molecules to form a multiprotein signaling complex. The protein is Chitinase-like protein Idgf1 (Idgf1) of Glossina morsitans morsitans (Savannah tsetse fly).